Consider the following 426-residue polypeptide: Gamma-glutamyl phosphate reductase (426 aa).

This sequence belongs to the gamma-glutamyl phosphate reductase family.

Its subcellular location is the cytoplasm. It carries out the reaction L-glutamate 5-semialdehyde + phosphate + NADP(+) = L-glutamyl 5-phosphate + NADPH + H(+). It functions in the pathway amino-acid biosynthesis; L-proline biosynthesis; L-glutamate 5-semialdehyde from L-glutamate: step 2/2. Catalyzes the NADPH-dependent reduction of L-glutamate 5-phosphate into L-glutamate 5-semialdehyde and phosphate. The product spontaneously undergoes cyclization to form 1-pyrroline-5-carboxylate. This chain is Gamma-glutamyl phosphate reductase, found in Nitrobacter winogradskyi (strain ATCC 25391 / DSM 10237 / CIP 104748 / NCIMB 11846 / Nb-255).